The sequence spans 154 residues: 6,7-dimethyl-8-ribityllumazine synthase (154 aa).

5-amino-6-(D-ribitylamino)uracil-binding positions include phenylalanine 21, 55 to 57 (AFE), and 79 to 81 (CVI). Residue 84–85 (AT) participates in (2S)-2-hydroxy-3-oxobutyl phosphate binding. Catalysis depends on histidine 87, which acts as the Proton donor. 5-amino-6-(D-ribitylamino)uracil is bound at residue phenylalanine 112. Residue arginine 126 participates in (2S)-2-hydroxy-3-oxobutyl phosphate binding.

Belongs to the DMRL synthase family. As to quaternary structure, forms an icosahedral capsid composed of 60 subunits, arranged as a dodecamer of pentamers.

The catalysed reaction is (2S)-2-hydroxy-3-oxobutyl phosphate + 5-amino-6-(D-ribitylamino)uracil = 6,7-dimethyl-8-(1-D-ribityl)lumazine + phosphate + 2 H2O + H(+). Its pathway is cofactor biosynthesis; riboflavin biosynthesis; riboflavin from 2-hydroxy-3-oxobutyl phosphate and 5-amino-6-(D-ribitylamino)uracil: step 1/2. Functionally, catalyzes the formation of 6,7-dimethyl-8-ribityllumazine by condensation of 5-amino-6-(D-ribitylamino)uracil with 3,4-dihydroxy-2-butanone 4-phosphate. This is the penultimate step in the biosynthesis of riboflavin. In Staphylococcus aureus (strain Mu50 / ATCC 700699), this protein is 6,7-dimethyl-8-ribityllumazine synthase.